The sequence spans 410 residues: D-amino acid dehydrogenase (410 aa).

FAD is bound at residue 9–14; the sequence is GGGIVG.

The protein belongs to the DadA oxidoreductase family. FAD is required as a cofactor.

Its subcellular location is the cell inner membrane. The enzyme catalyses a D-alpha-amino acid + a quinone + H2O = a 2-oxocarboxylate + a quinol + NH4(+). Catalyzes the oxidative deamination of D-amino acids. Has broad substrate specificity; is mostly active on D-proline, and to a lesser extent, on several other D-amino acids such as D-alanine, D-phenylalanine and D-serine. Mediates electron transport from D-proline to coenzyme Q1 in vitro, and is involved in the electron transport chain from D-proline to the c-type cytochrome in vivo. This chain is D-amino acid dehydrogenase, found in Helicobacter pylori (strain J99 / ATCC 700824) (Campylobacter pylori J99).